Reading from the N-terminus, the 294-residue chain is UDP-3-O-acyl-N-acetylglucosamine deacetylase (294 aa).

3 residues coordinate Zn(2+): His75, His232, and Asp236. His259 serves as the catalytic Proton donor.

Belongs to the LpxC family. Requires Zn(2+) as cofactor.

The catalysed reaction is a UDP-3-O-[(3R)-3-hydroxyacyl]-N-acetyl-alpha-D-glucosamine + H2O = a UDP-3-O-[(3R)-3-hydroxyacyl]-alpha-D-glucosamine + acetate. It participates in glycolipid biosynthesis; lipid IV(A) biosynthesis; lipid IV(A) from (3R)-3-hydroxytetradecanoyl-[acyl-carrier-protein] and UDP-N-acetyl-alpha-D-glucosamine: step 2/6. Its function is as follows. Catalyzes the hydrolysis of UDP-3-O-myristoyl-N-acetylglucosamine to form UDP-3-O-myristoylglucosamine and acetate, the committed step in lipid A biosynthesis. The sequence is that of UDP-3-O-acyl-N-acetylglucosamine deacetylase from Campylobacter concisus (strain 13826).